We begin with the raw amino-acid sequence, 427 residues long: Serine--tRNA ligase (427 aa).

Position 235 to 237 (235 to 237 (TAE)) interacts with L-serine. Residues 266 to 268 (RRE) and Val-282 each bind ATP. Glu-289 contributes to the L-serine binding site. 353 to 356 (EASS) contacts ATP. Ser-389 serves as a coordination point for L-serine.

It belongs to the class-II aminoacyl-tRNA synthetase family. Type-1 seryl-tRNA synthetase subfamily. As to quaternary structure, homodimer. The tRNA molecule binds across the dimer.

Its subcellular location is the cytoplasm. It catalyses the reaction tRNA(Ser) + L-serine + ATP = L-seryl-tRNA(Ser) + AMP + diphosphate + H(+). The catalysed reaction is tRNA(Sec) + L-serine + ATP = L-seryl-tRNA(Sec) + AMP + diphosphate + H(+). It functions in the pathway aminoacyl-tRNA biosynthesis; selenocysteinyl-tRNA(Sec) biosynthesis; L-seryl-tRNA(Sec) from L-serine and tRNA(Sec): step 1/1. Functionally, catalyzes the attachment of serine to tRNA(Ser). Is also able to aminoacylate tRNA(Sec) with serine, to form the misacylated tRNA L-seryl-tRNA(Sec), which will be further converted into selenocysteinyl-tRNA(Sec). The chain is Serine--tRNA ligase from Chlorobaculum parvum (strain DSM 263 / NCIMB 8327) (Chlorobium vibrioforme subsp. thiosulfatophilum).